Consider the following 1315-residue polypeptide: Serine-aspartate repeat-containing protein D (1315 aa).

The first 35 residues, 1-35 (MLNRENKTAITRKGMVSNRLNKFSIRKYTVGTASI), serve as a signal peptide directing secretion. The YSIRK-G/S signaling motif signature appears at 23–34 (FSIRKYTVGTAS). The interval 36-568 (LVGTTLIFGL…NNQSGGAGQE (533 aa)) is ligand binding A region. The interval 54-185 (ESTNKELNEA…NKKVDAKTES (132 aa)) is disordered. Polar residues-rich tracts occupy residues 62-71 (EATTSASDNQ) and 94-108 (EMVS…SNGN). Residues 130-145 (KSDEQASPKSTNEDLN) are compositionally biased toward basic and acidic residues. Composition is skewed to polar residues over residues 146–155 (TKQTISNQEA) and 163–173 (NKSVVNVQPTN). Basic and acidic residues predominate over residues 174–183 (EENKKVDAKT). 5 CNA-B domains span residues 569–680 (VYKI…IYKP), 681–791 (KYNL…YKTP), 792–901 (KYNL…FYKP), 902–1012 (TYNL…YKTP), and 1013–1123 (KYSL…EEET). Disordered regions lie at residues 857 to 883 (ETPS…TSTT), 972 to 992 (YTPT…GLTT), and 1078 to 1291 (EKPA…SNNA). Composition is skewed to polar residues over residues 860–869 (SGYTPTQVGS) and 972–981 (YTPTSVTSGN). 4 stretches are compositionally biased toward acidic residues: residues 1091-1101 (TEDDKDADGGE), 1118-1134 (YYEE…DSDS), 1142-1164 (SDSD…DSDS), and 1172-1254 (SDSD…DSDS). The LPXTG sorting signal motif lies at 1278-1282 (LPETG). A Pentaglycyl murein peptidoglycan amidated threonine modification is found at Thr1281. Positions 1282-1315 (GNENSGSNNATLFGGLFAALGSLLLFGRRKKQNK) are cleaved as a propeptide — removed by sortase.

This sequence belongs to the serine-aspartate repeat-containing protein (SDr) family. As to quaternary structure, interacts with host DSG1; this interaction increases S.aureus adherence to keratinocytes. Anchored to the cell wall by sortase A.

The protein localises to the secreted. It is found in the cell wall. Its function is as follows. Cell surface-associated calcium-binding protein which plays an important role in adhesion and pathogenesis. Mediates interactions with components of the extracellular matrix such as host DSG1 to promote bacterial adhesion to host cells. Contributes to the resistance to killing by innate immune components such as neutrophils present in blood and thus attenuates bacterial clearance. The chain is Serine-aspartate repeat-containing protein D (sdrD) from Staphylococcus aureus (strain Newman).